The sequence spans 321 residues: Zinc finger protein 524 (321 aa).

Composition is skewed to polar residues over residues 1–14 (MDNPSSDPLPSTLS) and 39–48 (ATTSNRTLKS). Disordered stretches follow at residues 1 to 80 (MDNP…DLLL) and 86 to 105 (VPYTVPEGSAADGPQGSGSK). The a.T hook DNA-binding region spans 49–59 (SLPRKRGRPPR). 4 C2H2-type zinc fingers span residues 109–131 (HFCPVCLRAFPYLSDLERHSISH), 137–159 (HVCKDCGKTFKRSSHLRRHCNIH), 165–187 (FRCVLCPRRFREAGELAHHHRIH), and 193–216 (YQCPSCRVRFTEANTLRRHYKRKH). The segment at 248–321 (GVQEESPEGK…PGAIGHPPVD (74 aa)) is disordered. The segment covering 262 to 271 (PISSTTSPLS) has biased composition (polar residues). Residues 274-285 (TAGGSAGAGRGQ) are compositionally biased toward gly residues.

Belongs to the krueppel C2H2-type zinc-finger protein family.

Its subcellular location is the nucleus. In terms of biological role, may be involved in transcriptional regulation. This Mus musculus (Mouse) protein is Zinc finger protein 524 (Znf524).